A 300-amino-acid polypeptide reads, in one-letter code: 2-methylisocitrate lyase (300 aa).

53-55 lines the substrate pocket; it reads SGD. The Mg(2+) site is built by Asp92 and Asp94. Substrate contacts are provided by residues 129–130, Arg162, Glu192, 214–216, Arg245, and Arg274; these read CG and NMT.

The protein belongs to the isocitrate lyase/PEP mutase superfamily. Methylisocitrate lyase family. Mg(2+) serves as cofactor.

It catalyses the reaction 3-hydroxybutane-1,2,3-tricarboxylate = pyruvate + succinate. In terms of biological role, involved in the methylcitric acid cycle. Catalyzes the cleavage of 2-methylisocitrate to yield pyruvate and succinate. This is 2-methylisocitrate lyase from Halalkalibacterium halodurans (strain ATCC BAA-125 / DSM 18197 / FERM 7344 / JCM 9153 / C-125) (Bacillus halodurans).